The following is a 134-amino-acid chain: Small ribosomal subunit protein uS8c (134 aa).

It belongs to the universal ribosomal protein uS8 family. In terms of assembly, part of the 30S ribosomal subunit.

It is found in the plastid. The protein resides in the chloroplast. Functionally, one of the primary rRNA binding proteins, it binds directly to 16S rRNA central domain where it helps coordinate assembly of the platform of the 30S subunit. This is Small ribosomal subunit protein uS8c (rps8) from Aethionema cordifolium (Lebanon stonecress).